We begin with the raw amino-acid sequence, 312 residues long: Polyhedral envelope protein (312 aa).

The protein belongs to the baculoviridae PE family.

The protein resides in the virion membrane. In terms of biological role, major component of the polyhedra envelope. The sequence is that of Polyhedral envelope protein from Lymantria dispar multicapsid nuclear polyhedrosis virus (LdMNPV).